Consider the following 584-residue polypeptide: Arginine--tRNA ligase (584 aa).

The short motif at 127 to 137 (PNTNKPLHIGH) is the 'HIGH' region element.

Belongs to the class-I aminoacyl-tRNA synthetase family. In terms of assembly, monomer.

It is found in the cytoplasm. The enzyme catalyses tRNA(Arg) + L-arginine + ATP = L-arginyl-tRNA(Arg) + AMP + diphosphate. The sequence is that of Arginine--tRNA ligase from Borrelia hermsii (strain HS1 / DAH).